The primary structure comprises 454 residues: Ig mu chain C region (454 aa).

Positions 1–105 (SPSSPTVFPL…NKDLRVPIPV (105 aa)) are CH1. A disulfide bridge links C27 with C88. N-linked (GlcNAc...) asparagine glycans are attached at residues N45, N112, N192, N210, N238, N257, and N280. The segment at 106-218 (VTEMNPNVSV…KNVSSTCAAS (113 aa)) is CH2. C135 and C198 are oxidised to a cystine. A CH3 region spans residues 219-324 (PSTDIQAFPI…QKKFISKPRE (106 aa)). Disulfide bonds link C245/C304 and C352/C414. The tract at residues 325-454 (MNKTPPAVYQ…IMSDAGGTCY (130 aa)) is CH4. N441 carries N-linked (GlcNAc...) asparagine glycosylation.

The sequence is that of Ig mu chain C region from Mesocricetus auratus (Golden hamster).